Reading from the N-terminus, the 518-residue chain is Forkhead box protein H1 (518 aa).

The disordered stretch occupies residues 72–113 (GSMYGLSPGTHEGSCTHTHEGPKDSMAGDQTRSRKSKKKNYH). The segment covering 104 to 113 (SRKSKKKNYH) has biased composition (basic residues). A DNA-binding region (fork-head) is located at residues 117 to 213 (KPPYSYLAMI…MKLQNTALTR (97 aa)). The segment at 318 to 397 (KPTRNARSPG…NYSPIEPPKK (80 aa)) is disordered. Low complexity predominate over residues 329-346 (STIHSTYSSSSSSISTIS). The segment at 380–506 (TSSDPDTGNY…PSFLSQCLGS (127 aa)) is SMAD-interaction domain (SID). The Fast/FoxH1 motif 1 (FM1) signature appears at 405 to 409 (LPTSY). The short motif at 415–421 (PNVVAPP) is the Fast/FoxH1 motif 2 (FM2) element. Residues 470–491 (LDNMLRAMPPNKSVFDVLTSHP) carry the SMAD interaction motif (SIM) motif.

As to quaternary structure, ARF1 contains 2 smad2s, 1 smad4 and 1 foxh1/fast-1 protein. Interaction with smad4 is most likely indirect through interaction with the MH2 domain of smad2. Binds to the MH2 domain of smad3, which can incorporate into the ARF1 complex. The ARF1 and ARF2 complexes are activated by distinct TGF-beta family members; formation of ARF1 is promoted by activin. Interacts (via Fork-head domain) with gtf2ird1/wbscr11 (via repeats 4-5). As to expression, highly expressed in the animal cap (prospective ectoderm) and prospective mesoderm of stage 10.25 embryos.

The protein localises to the nucleus. In terms of biological role, transcriptional activator. Recognizes and binds to the DNA sequence 5'-TGT[GT][GT]ATT-3'. Upon TGF-beta induction, forms a transcriptionally active complex with smad2 and smad4 called activin-responsive factor 1 (ARF1), which binds a site on the mix-B/mix.2 promoter called the activin response element (ARE). Binds to activated smads and the ARE with much lower affinity than fast3. Necessary for the first steps in mesoderm specification, directly inducing mesodermal genes. Acts with fast3 to control the convergent extension movements of gastrulation. Binds to the proximal element (PE) of the gsc gene and cooperates with gtf2ird1/wbscr11 and SMAD proteins to regulate gsc transcription. This is Forkhead box protein H1 (foxh1) from Xenopus laevis (African clawed frog).